Reading from the N-terminus, the 153-residue chain is Large ribosomal subunit protein uL30 (153 aa).

It belongs to the universal ribosomal protein uL30 family. As to quaternary structure, part of the 50S ribosomal subunit.

This Metallosphaera sedula (strain ATCC 51363 / DSM 5348 / JCM 9185 / NBRC 15509 / TH2) protein is Large ribosomal subunit protein uL30.